A 178-amino-acid polypeptide reads, in one-letter code: Ribosome maturation factor RimM (178 aa).

The region spanning 93 to 170 (EGSYYYHELR…ALTADAPAGL (78 aa)) is the PRC barrel domain.

The protein belongs to the RimM family. In terms of assembly, binds ribosomal protein uS19.

The protein resides in the cytoplasm. In terms of biological role, an accessory protein needed during the final step in the assembly of 30S ribosomal subunit, possibly for assembly of the head region. Essential for efficient processing of 16S rRNA. May be needed both before and after RbfA during the maturation of 16S rRNA. It has affinity for free ribosomal 30S subunits but not for 70S ribosomes. The sequence is that of Ribosome maturation factor RimM from Deinococcus geothermalis (strain DSM 11300 / CIP 105573 / AG-3a).